Consider the following 127-residue polypeptide: Large ribosomal subunit protein eL32 (127 aa).

Residues 38–48 (WRRPKGIDSKM) show a composition bias toward basic and acidic residues. Positions 38–66 (WRRPKGIDSKMRLKKKGKPRSPSIGWSSP) are disordered.

It belongs to the eukaryotic ribosomal protein eL32 family.

This Thermococcus gammatolerans (strain DSM 15229 / JCM 11827 / EJ3) protein is Large ribosomal subunit protein eL32.